Consider the following 148-residue polypeptide: Small ribosomal subunit protein uS7m (148 aa).

Belongs to the universal ribosomal protein uS7 family. Part of the small ribosomal subunit.

The protein localises to the mitochondrion. Functionally, one of the primary rRNA binding proteins, it binds directly to 18S rRNA where it nucleates assembly of the head domain of the small subunit. The sequence is that of Small ribosomal subunit protein uS7m (RPS7) from Triticum aestivum (Wheat).